We begin with the raw amino-acid sequence, 493 residues long: Probable cytochrome P450 6a13 (493 aa).

Position 435 (cysteine 435) interacts with heme.

This sequence belongs to the cytochrome P450 family. Heme is required as a cofactor.

It localises to the endoplasmic reticulum membrane. The protein resides in the microsome membrane. May be involved in the metabolism of insect hormones and in the breakdown of synthetic insecticides. In Drosophila melanogaster (Fruit fly), this protein is Probable cytochrome P450 6a13 (Cyp6a13).